The following is a 1098-amino-acid chain: Paired amphipathic helix protein Sin3b (1098 aa).

Over residues 1-25 (MAHAGSGGSAGRGFGGSRWGRSGSG) the composition is skewed to gly residues. Residues 1–26 (MAHAGSGGSAGRGFGGSRWGRSGSGG) form a disordered region. Residues 1 to 299 (MAHAGSGGSA…VGKYGTLQEF (299 aa)) form an interaction with CRY1 region. PAH domains follow at residues 30–100 (LPVH…LPLG) and 145–230 (VPLE…LPEA). The interval 52–98 (PATYNGFLEIMKEFKSQSIDTPGVIRRVSQLFHEHPDLIVGFNAFLP) is interaction with REST. Positions 238-247 (NGSCEMNSGQ) are enriched in polar residues. The tract at residues 238-274 (NGSCEMNSGQKNEEKSLEHNKKRSRPSLLRPVSAPAK) is disordered. The interval 275–499 (KKMKLRGTKD…CLGGTSEVIQ (225 aa)) is interaction with NCOR1. In terms of domain architecture, PAH 3 spans 283-360 (KDLSIAAVGK…AQFKSFLGVK (78 aa)). Residues 383–550 (ASCKRIGSSY…REAQQGFNKI (168 aa)) are interaction with SUDS3 and HDAC1. The segment at 661–702 (QQCPGTSDDSADERDRDRDSAEPERRRPTDEKPPADASPEPP) is disordered. Phosphoserine occurs at positions 667 and 670. Basic and acidic residues predominate over residues 673 to 694 (ERDRDRDSAEPERRRPTDEKPP).

In terms of assembly, component of the SIN3B complex, which includes SIN3B, HDAC2 or HDAC1, PHF12 and MORF4L1. Interacts with FOXK1/MNF, MXI, MAD, NCOR1 and SAP30. Interaction with SUDS3 enhances the interaction with HDAC1 to form a complex. Interacts with CRY1, HCFC1, MAD3, MAD4, MAEL, REST, RNF220 and SETDB1. Interacts with C6orf89. Interacts with MYT1L. Post-translationally, ubiquitinated by RNF220 that leads to proteasomal degradation.

Its subcellular location is the nucleus. Its function is as follows. Acts as a transcriptional repressor. Interacts with MXI1 to repress MYC responsive genes and antagonize MYC oncogenic activities. Interacts with MAD-MAX heterodimers by binding to MAD. The heterodimer then represses transcription by tethering SIN3B to DNA. Also forms a complex with FOXK1 which represses transcription. With FOXK1, regulates cell cycle progression probably by repressing cell cycle inhibitor genes expression. As part of the SIN3B complex represses transcription and counteracts the histone acetyltransferase activity of EP300 through the recognition H3K27ac marks by PHF12 and the activity of the histone deacetylase HDAC2. SIN3B complex is recruited downstream of the constitutively active genes transcriptional start sites through interaction with histones and mitigates histone acetylation and RNA polymerase II progression within transcribed regions contributing to the regulation of transcription. This is Paired amphipathic helix protein Sin3b (Sin3b) from Mus musculus (Mouse).